The sequence spans 375 residues: Succinyl-diaminopimelate desuccinylase (375 aa).

H66 serves as a coordination point for Zn(2+). D68 is a catalytic residue. D99 lines the Zn(2+) pocket. E133 acts as the Proton acceptor in catalysis. The Zn(2+) site is built by E134, E162, and H348.

Belongs to the peptidase M20A family. DapE subfamily. Homodimer. The cofactor is Zn(2+). Requires Co(2+) as cofactor.

The enzyme catalyses N-succinyl-(2S,6S)-2,6-diaminopimelate + H2O = (2S,6S)-2,6-diaminopimelate + succinate. Its pathway is amino-acid biosynthesis; L-lysine biosynthesis via DAP pathway; LL-2,6-diaminopimelate from (S)-tetrahydrodipicolinate (succinylase route): step 3/3. Its function is as follows. Catalyzes the hydrolysis of N-succinyl-L,L-diaminopimelic acid (SDAP), forming succinate and LL-2,6-diaminopimelate (DAP), an intermediate involved in the bacterial biosynthesis of lysine and meso-diaminopimelic acid, an essential component of bacterial cell walls. In Cronobacter sakazakii (strain ATCC BAA-894) (Enterobacter sakazakii), this protein is Succinyl-diaminopimelate desuccinylase.